A 148-amino-acid chain; its full sequence is IQ domain-containing protein F5 (148 aa).

IQ domains follow at residues 11-40 (ETSA…SAWI) and 67-96 (KTWA…AVRI).

This Mus musculus (Mouse) protein is IQ domain-containing protein F5 (Iqcf5).